A 319-amino-acid polypeptide reads, in one-letter code: Thioredoxin reductase (319 aa).

FAD-binding positions include 11-14 (SGPA), 40-41 (IA), Gln-45, Asn-54, Cys-145, Asp-288, and 295-297 (RQA). A disulfide bridge links Cys-142 with Cys-145.

Belongs to the class-II pyridine nucleotide-disulfide oxidoreductase family. In terms of assembly, homodimer. FAD serves as cofactor.

The protein resides in the cytoplasm. It catalyses the reaction [thioredoxin]-dithiol + NADP(+) = [thioredoxin]-disulfide + NADPH + H(+). The polypeptide is Thioredoxin reductase (TRR1) (Candida glabrata (strain ATCC 2001 / BCRC 20586 / JCM 3761 / NBRC 0622 / NRRL Y-65 / CBS 138) (Yeast)).